A 70-amino-acid chain; its full sequence is NAD(P)H-quinone oxidoreductase subunit L (70 aa).

The next 2 membrane-spanning stretches (helical) occupy residues 2–22 (IVAL…PIAV) and 39–59 (LLMY…SPFA).

It belongs to the complex I NdhL subunit family. NDH-1 can be composed of about 15 different subunits; different subcomplexes with different compositions have been identified which probably have different functions.

Its subcellular location is the cellular thylakoid membrane. It catalyses the reaction a plastoquinone + NADH + (n+1) H(+)(in) = a plastoquinol + NAD(+) + n H(+)(out). The enzyme catalyses a plastoquinone + NADPH + (n+1) H(+)(in) = a plastoquinol + NADP(+) + n H(+)(out). In terms of biological role, NDH-1 shuttles electrons from an unknown electron donor, via FMN and iron-sulfur (Fe-S) centers, to quinones in the respiratory and/or the photosynthetic chain. The immediate electron acceptor for the enzyme in this species is believed to be plastoquinone. Couples the redox reaction to proton translocation, and thus conserves the redox energy in a proton gradient. Cyanobacterial NDH-1 also plays a role in inorganic carbon-concentration. The sequence is that of NAD(P)H-quinone oxidoreductase subunit L from Nostoc punctiforme (strain ATCC 29133 / PCC 73102).